The chain runs to 189 residues: MNGLPATEAPGGAGCALAGLPPLPRGLSGLLNASGGSWRELERVYSQRSRIHDELSRAARAPDGPRHAAGSANSGSAAGPRRPVNLDSALAALRKEMVGLRQLDMSLLCQLWGLYESIQDYKHLCQDLSLCQDLSSSLHSDSSYPPDAGLSDDEEPPDASLPPDPPPLTVPQTHNARDQWLQDAFQISL.

Phosphoserine is present on S28. The segment at E54–R82 is disordered. A compositionally biased stretch (low complexity) spans A68 to G79. Residues L86 to L114 form an LRR repeat. The disordered stretch occupies residues S136 to N175. The segment covering A159–T169 has biased composition (pro residues). The residue at position 188 (S188) is a Phosphoserine.

This sequence belongs to the FAM89 family. As to quaternary structure, interacts with SKI. Interacts (via LRR repeat) with CDC42BPA (via AGC-kinase C-terminal domain), CDC42BPB (via AGC-kinase C-terminal domain) and LIMK1 (via LIM zinc-binding domains). Forms a tripartite complex with CDC42BPA, CDC42BPB and LIMK1. (Microbial infection) Interacts with mouse mammary tumor virus (MMTV) envelope glycoprotein gp70. In terms of tissue distribution, widely expressed. Expressed in the early postnatal brain.

Its subcellular location is the cytoplasm. It is found in the cell projection. The protein localises to the lamellipodium. The protein resides in the cell surface. Its function is as follows. Negatively regulates TGF-beta-induced signaling; in cooperation with SKI prevents the translocation of SMAD2 from the nucleus to the cytoplasm in response to TGF-beta. Acts as an adapter that mediates the specific recognition of LIMK1 by CDC42BPA and CDC42BPB in the lamellipodia. LRAP25-mediated CDC42BPA/CDC42BPB targeting to LIMK1 and the lamellipodium results in LIMK1 activation and the subsequent phosphorylation of CFL1 which is important for lamellipodial F-actin regulation. Functionally, (Microbial infection) May be a receptor for mouse mammary tumor virus (MMTV). The chain is Leucine repeat adapter protein 25 from Mus musculus (Mouse).